A 991-amino-acid chain; its full sequence is Gingipain R1 (991 aa).

A signal peptide spans 1–24; that stretch reads MKNLNKFVSIALCSSLLGGMAFAQ. The propeptide occupies 25–227; the sequence is QTELGRNPNV…RMFMNYEPGR (203 aa). Aspartate 305, valine 327, aspartate 330, tyrosine 332, glutamate 334, glutamate 388, and histidine 393 together coordinate Ca(2+). Histidine 438 acts as the Proton donor in catalysis. The active-site Nucleophile is cysteine 471. Residues phenylalanine 476, glutamate 485, aspartate 519, glutamate 520, glutamate 523, and histidine 529 each contribute to the Ca(2+) site.

This sequence belongs to the peptidase C25 family.

It is found in the secreted. The enzyme catalyses Hydrolysis of proteins and small molecule substrates, with a preference for Arg in P1.. Requires cysteine for activation and Ca(2+) and/or Mg(2+) for stabilization. It is stimulated by glycine-containing dipeptides. It is resistant to inhibition by proteinase inhibitors in human plasma. Functionally, thiol protease. Acts synergistically with RgpB to catalyze the maturation of fimbrial subunits, such as FimA. Its proteolytic activity is a major factor in both periodontal tissue destruction and in evasion of host defense mechanisms. This is Gingipain R1 (rgpA) from Porphyromonas gingivalis (Bacteroides gingivalis).